The chain runs to 237 residues: Methylthioribulose-1-phosphate dehydratase (237 aa).

C98 lines the substrate pocket. Zn(2+) is bound by residues H116 and H118. E140 serves as the catalytic Proton donor/acceptor. H196 contacts Zn(2+).

This sequence belongs to the aldolase class II family. MtnB subfamily. Zn(2+) is required as a cofactor.

The protein localises to the cytoplasm. The enzyme catalyses 5-(methylsulfanyl)-D-ribulose 1-phosphate = 5-methylsulfanyl-2,3-dioxopentyl phosphate + H2O. Its pathway is amino-acid biosynthesis; L-methionine biosynthesis via salvage pathway; L-methionine from S-methyl-5-thio-alpha-D-ribose 1-phosphate: step 2/6. Its function is as follows. Catalyzes the dehydration of methylthioribulose-1-phosphate (MTRu-1-P) into 2,3-diketo-5-methylthiopentyl-1-phosphate (DK-MTP-1-P). This chain is Methylthioribulose-1-phosphate dehydratase, found in Laccaria bicolor (strain S238N-H82 / ATCC MYA-4686) (Bicoloured deceiver).